The following is a 352-amino-acid chain: Pre-rRNA-processing protein ipi1 (352 aa).

It belongs to the IPI1/TEX10 family. Component of the RIX1 complex, composed of rrm-9/ipi1, rix1/ipi2 and ipi3 in a 1:2:2 stoichiometry. The complex interacts (via rix1) with mdn1 (via its hexameric AAA ATPase ring) and the pre-60S ribosome particles.

The protein localises to the nucleus. In terms of biological role, component of the RIX1 complex required for processing of ITS2 sequences from 35S pre-rRNA. This Neurospora crassa (strain ATCC 24698 / 74-OR23-1A / CBS 708.71 / DSM 1257 / FGSC 987) protein is Pre-rRNA-processing protein ipi1 (rrm-9).